Reading from the N-terminus, the 506-residue chain is Cysteine protease 1 (506 aa).

The disordered stretch occupies residues 1-21 (MTSSRPSGRDSTGWQETVSNT). C226 serves as the catalytic Nucleophile. Active-site residues include D399 and H401.

This sequence belongs to the peptidase C54 family.

It is found in the cytoplasm. The protein localises to the nucleus. It localises to the preautophagosomal structure. The catalysed reaction is [protein]-C-terminal L-amino acid-glycyl-phosphatidylethanolamide + H2O = [protein]-C-terminal L-amino acid-glycine + a 1,2-diacyl-sn-glycero-3-phosphoethanolamine. Its function is as follows. Cysteine protease that plays a key role in cytoplasm to vacuole transport (Cvt) and autophagy by mediating both proteolytic activation and delipidation of ATG8. Required for selective autophagic degradation of the nucleus (nucleophagy) as well as for mitophagy which contributes to regulate mitochondrial quantity and quality by eliminating the mitochondria to a basal level to fulfill cellular energy requirements and preventing excess ROS production. The protease activity is required for proteolytic activation of ATG8: cleaves the C-terminal amino acid of ATG8 to reveal a C-terminal glycine. ATG8 ubiquitin-like activity requires the exposure of the glycine at the C-terminus for its conjugation to phosphatidylethanolamine (PE) and its insertion to membranes, which is necessary for autophagy. The ATG8-PE conjugate mediates tethering between adjacent membranes and stimulates membrane hemifusion, leading to expansion of the autophagosomal membrane during autophagy. In addition to the protease activity, also catalyzes deconjugation of PE-conjugated forms of ATG8 during macroautophagy: ATG8 delipidation is required to release the protein from membranes, which facilitates multiple events during macroautophagy, and especially for efficient autophagosome biogenesis, the assembly of ATG9-containing tubulovesicular clusters into phagophores/autophagosomes, and for the disassembly of PAS-associated ATG components. ATG8 delipidation by ATG4 also recycles ATG8-PE generated on inappropriate membranes to maintain a reservoir of unlipidated ATG8 that is required for autophagosome formation at the PAS. This chain is Cysteine protease 1 (cpr-1), found in Neurospora crassa (strain ATCC 24698 / 74-OR23-1A / CBS 708.71 / DSM 1257 / FGSC 987).